A 283-amino-acid chain; its full sequence is Cyclin-C (283 aa).

The 99-residue stretch at 46 to 144 (NVIQALGEHL…ILECEFYLLE (99 aa)) folds into the Cyclin N-terminal domain. Residues 252–283 (TILSKMPKPKPPPNSEGEQGPNGSQNSSYSQS) are disordered. The segment covering 272-283 (PNGSQNSSYSQS) has biased composition (polar residues).

It belongs to the cyclin family. Cyclin C subfamily. In terms of assembly, component of the Mediator complex. The cylin/CDK pair formed by CCNC/CDK8 also associates with the large subunit of RNA polymerase II.

The protein localises to the nucleus. Functionally, component of the Mediator complex, a coactivator involved in regulated gene transcription of nearly all RNA polymerase II-dependent genes. Mediator functions as a bridge to convey information from gene-specific regulatory proteins to the basal RNA polymerase II transcription machinery. Mediator is recruited to promoters by direct interactions with regulatory proteins and serves as a scaffold for the assembly of a functional preinitiation complex with RNA polymerase II and the general transcription factors. Binds to and activates cyclin-dependent kinase CDK8 that phosphorylates the CTD (C-terminal domain) of the large subunit of RNA polymerase II (RNAp II), which may inhibit the formation of a transcription initiation complex. This chain is Cyclin-C (CCNC), found in Gallus gallus (Chicken).